A 90-amino-acid polypeptide reads, in one-letter code: UPF0223 protein lwe1035 (90 aa).

Belongs to the UPF0223 family.

The polypeptide is UPF0223 protein lwe1035 (Listeria welshimeri serovar 6b (strain ATCC 35897 / DSM 20650 / CCUG 15529 / CIP 8149 / NCTC 11857 / SLCC 5334 / V8)).